A 390-amino-acid chain; its full sequence is Protein phosphatase methylesterase 1 (390 aa).

The tract at residues 19-50 is disordered; it reads FGLSSLSEDPDESESNSNYFSPTPQPPNELRT. An AB hydrolase-1 domain is found at 100–332; it reads PIFICHHGAG…NLIIGQMQGK (233 aa). Catalysis depends on residues serine 186, aspartate 213, and histidine 346.

Belongs to the AB hydrolase superfamily.

It catalyses the reaction [phosphatase 2A protein]-C-terminal L-leucine methyl ester + H2O = [phosphatase 2A protein]-C-terminal L-leucine + methanol + H(+). Its function is as follows. Demethylates proteins that have been reversibly carboxymethylated. Demethylates the phosphatase PP2A catalytic subunit. This chain is Protein phosphatase methylesterase 1 (PPE1), found in Debaryomyces hansenii (strain ATCC 36239 / CBS 767 / BCRC 21394 / JCM 1990 / NBRC 0083 / IGC 2968) (Yeast).